Consider the following 98-residue polypeptide: Small ribosomal subunit protein eS24 (98 aa).

Belongs to the eukaryotic ribosomal protein eS24 family.

The polypeptide is Small ribosomal subunit protein eS24 (Thermococcus gammatolerans (strain DSM 15229 / JCM 11827 / EJ3)).